Reading from the N-terminus, the 78-residue chain is Sec-independent protein translocase protein TatA (78 aa).

Residues 1 to 21 form a helical membrane-spanning segment; that stretch reads MGSLSIWHWIVVVAVILLLFG. The span at 43 to 55 shows a compositional bias: basic and acidic residues; that stretch reads MKDDEKTAEKPEP. Positions 43-78 are disordered; it reads MKDDEKTAEKPEPVKTINHNADGSGAARSDTGSKVI.

It belongs to the TatA/E family. In terms of assembly, the Tat system comprises two distinct complexes: a TatABC complex, containing multiple copies of TatA, TatB and TatC subunits, and a separate TatA complex, containing only TatA subunits. Substrates initially bind to the TatABC complex, which probably triggers association of the separate TatA complex to form the active translocon.

The protein resides in the cell inner membrane. Part of the twin-arginine translocation (Tat) system that transports large folded proteins containing a characteristic twin-arginine motif in their signal peptide across membranes. TatA could form the protein-conducting channel of the Tat system. This chain is Sec-independent protein translocase protein TatA, found in Nitrobacter winogradskyi (strain ATCC 25391 / DSM 10237 / CIP 104748 / NCIMB 11846 / Nb-255).